A 150-amino-acid polypeptide reads, in one-letter code: MKILIADDNIQKQRVLRTCIEENFGSSDITQTFSFTTTIKALTSSVKFDIILLDMTMPNYDSKEPMNNDGKMRTLAGQDVITKMAYRGITTPTIIVTQFEVFGRHSSLKPISEIAQELIASYPNIVKGYVLFDLQSELWKTDLIKKITEL.

Residues 2–150 (KILIADDNIQ…TDLIKKITEL (149 aa)) enclose the Response regulatory domain. Position 54 is a 4-aspartylphosphate (aspartate 54).

In terms of processing, probably phosphorylated by DtcA.

Functionally, possible phosphate scavenger member of the two-component regulatory system Detocs that confers resistance to bacteriophage. When the system (DtcA-DtcB-DtcC) is expressed in a susceptible E.coli (strain MG1655) it confers resistance to bacteriophages T2, T4, T5, T7, SECphi4, SECphi6 and SECphi27; the level of resistance varies, resistance to T2, T7 and SECphi4 is not very high. DtcA probably autophosphorylates upon sensing viral infection, and subsequently transfers the phosphate signal to DtcC which activates it, leading to an antiviral defense; DtcB (this subunit) may scavenge phosphorylation signals from accidental activation of DtcA. This chain is Detocs response regulatory protein DtcB, found in Enterobacter cloacae (strain JD6301).